Reading from the N-terminus, the 211-residue chain is Mediator of RNA polymerase II transcription subunit 18 (211 aa).

It belongs to the Mediator complex subunit 18 family. Component of the Mediator complex.

The protein localises to the nucleus. Its function is as follows. Component of the Mediator complex, a coactivator involved in the regulated transcription of nearly all RNA polymerase II-dependent genes. Mediator functions as a bridge to convey information from gene-specific regulatory proteins to the basal RNA polymerase II transcription machinery. Mediator is recruited to promoters by direct interactions with regulatory proteins and serves as a scaffold for the assembly of a functional preinitiation complex with RNA polymerase II and the general transcription factors. The sequence is that of Mediator of RNA polymerase II transcription subunit 18 (MED18) from Anopheles gambiae (African malaria mosquito).